The chain runs to 185 residues: Ribosome-recycling factor (185 aa).

Basic and acidic residues predominate over residues 131 to 155 (DRKNANDKIKKSEKDKEITADESKS). Positions 131 to 156 (DRKNANDKIKKSEKDKEITADESKSA) are disordered.

Belongs to the RRF family.

The protein resides in the cytoplasm. Responsible for the release of ribosomes from messenger RNA at the termination of protein biosynthesis. May increase the efficiency of translation by recycling ribosomes from one round of translation to another. The chain is Ribosome-recycling factor from Sulfurimonas denitrificans (strain ATCC 33889 / DSM 1251) (Thiomicrospira denitrificans (strain ATCC 33889 / DSM 1251)).